A 222-amino-acid chain; its full sequence is Voltage-dependent calcium channel gamma-1 subunit (222 aa).

Topologically, residues 1–10 (MSQTKMLKVR) are cytoplasmic. Residues 11 to 29 (VTLFCILAGIVLAMTAVVT) traverse the membrane as a helical segment. Residues 30–108 (DHWAVLSPHM…TQKEYSISAA (79 aa)) are Extracellular-facing. N-linked (GlcNAc...) asparagine glycosylation is found at Asn43 and Asn79. Cys57 and Cys80 are joined by a disulfide. The chain crosses the membrane as a helical span at residues 109–129 (AIAIFSLGFIILGSLCVLLSL). Residues 130-134 (GKKRD) are Cytoplasmic-facing. A helical membrane pass occupies residues 135 to 155 (YLLRPASMFYAFAGLCILVSV). Residues 156-179 (EVMRQSVKRMIDSEDTVWIEYYYS) lie on the Extracellular side of the membrane. A helical transmembrane segment spans residues 180–204 (WSFACACAAFILLFLGGLALLLFSL). The Cytoplasmic segment spans residues 205–222 (PRMPRNPWESCMDAEPEH).

Belongs to the PMP-22/EMP/MP20 family. CACNG subfamily. In terms of assembly, component of a calcium channel complex consisting of a pore-forming alpha subunit (CACNA1S) and the ancillary subunits CACNB1 or CACNB2, CACNG1 and CACNA2D1. The channel complex contains alpha, beta, gamma and delta subunits in a 1:1:1:1 ratio, i.e. it contains either CACNB1 or CACNB2. Post-translationally, N-glycosylated. Skeletal muscle.

It localises to the cell membrane. It is found in the sarcolemma. Regulatory subunit of the voltage-gated calcium channel that gives rise to L-type calcium currents in skeletal muscle. Regulates channel inactivation kinetics. The sequence is that of Voltage-dependent calcium channel gamma-1 subunit (CACNG1) from Homo sapiens (Human).